The following is a 37-amino-acid chain: Fructose-bisphosphate aldolase A (37 aa).

The protein belongs to the class I fructose-bisphosphate aldolase family. As to quaternary structure, tetramer.

It catalyses the reaction beta-D-fructose 1,6-bisphosphate = D-glyceraldehyde 3-phosphate + dihydroxyacetone phosphate. The protein operates within carbohydrate degradation; glycolysis; D-glyceraldehyde 3-phosphate and glycerone phosphate from D-glucose: step 4/4. Its function is as follows. Plays a key role in glycolysis and gluconeogenesis. This is Fructose-bisphosphate aldolase A from Thunnus albacares (Yellowfin tuna).